The primary structure comprises 671 residues: UvrABC system protein B (671 aa).

The 389-residue stretch at 26–414 (EGLENGLAHQ…GGDIIEQVVR (389 aa)) folds into the Helicase ATP-binding domain. 39 to 46 (GVTGSGKT) contacts ATP. The Beta-hairpin signature appears at 92–115 (YYDYYQPEAYVPSSDTFIEKDASV). The Helicase C-terminal domain occupies 431–593 (QVDDLLSEIR…IIPQGLNKKI (163 aa)). The UVR domain maps to 631–666 (DQKIRELEAKMYTYAQNLEFEQAAELRDQVHQLRQQ).

Belongs to the UvrB family. Forms a heterotetramer with UvrA during the search for lesions. Interacts with UvrC in an incision complex.

It is found in the cytoplasm. Functionally, the UvrABC repair system catalyzes the recognition and processing of DNA lesions. A damage recognition complex composed of 2 UvrA and 2 UvrB subunits scans DNA for abnormalities. Upon binding of the UvrA(2)B(2) complex to a putative damaged site, the DNA wraps around one UvrB monomer. DNA wrap is dependent on ATP binding by UvrB and probably causes local melting of the DNA helix, facilitating insertion of UvrB beta-hairpin between the DNA strands. Then UvrB probes one DNA strand for the presence of a lesion. If a lesion is found the UvrA subunits dissociate and the UvrB-DNA preincision complex is formed. This complex is subsequently bound by UvrC and the second UvrB is released. If no lesion is found, the DNA wraps around the other UvrB subunit that will check the other stand for damage. The sequence is that of UvrABC system protein B from Yersinia pestis.